A 173-amino-acid polypeptide reads, in one-letter code: Archaemetzincin (173 aa).

His-130 lines the Zn(2+) pocket. The active-site Proton acceptor is the Glu-131. Zn(2+) contacts are provided by His-134, His-140, Cys-141, Cys-146, Cys-165, and Cys-168.

The protein belongs to the peptidase M54 family. Monomer. The cofactor is Zn(2+).

Its function is as follows. Probable zinc metalloprotease whose natural substrate is unknown. This chain is Archaemetzincin, found in Natronomonas pharaonis (strain ATCC 35678 / DSM 2160 / CIP 103997 / JCM 8858 / NBRC 14720 / NCIMB 2260 / Gabara) (Halobacterium pharaonis).